We begin with the raw amino-acid sequence, 97 residues long: Serine protease inhibitor Kazal-type 14 (97 aa).

The N-terminal stretch at 1 to 21 is a signal peptide; it reads MAKSFPVFSLLSFILIHLVLS. Residues 34–97 form the Kazal-like domain; the sequence is GIIKVKCPYE…RIRFYHDGKC (64 aa). Cystine bridges form between cysteine 40-cysteine 79, cysteine 57-cysteine 76, and cysteine 65-cysteine 97. N-linked (GlcNAc...) asparagine glycosylation is present at asparagine 51.

It is found in the secreted. Functionally, may be a serine protease inhibitor. This Homo sapiens (Human) protein is Serine protease inhibitor Kazal-type 14 (SPINK14).